Consider the following 685-residue polypeptide: Hemocyanin subunit X (685 aa).

Positions 1-20 (MKYCTESLILILAVIGCISA) are cleaved as a signal peptide. Positions 210, 214, and 243 each coordinate Cu cation. Residue asparagine 329 is glycosylated (N-linked (GlcNAc...) asparagine). Residues histidine 367, histidine 371, and histidine 407 each coordinate Cu cation. A disulfide bond links cysteine 577 and cysteine 625.

This sequence belongs to the tyrosinase family. Hemocyanin subfamily.

The protein resides in the secreted. The protein localises to the extracellular space. Functionally, hemocyanins are copper-containing oxygen carriers occurring freely dissolved in the hemolymph of many mollusks and arthropods. In Scutigera coleoptrata (House centipede), this protein is Hemocyanin subunit X (HCX).